A 105-amino-acid polypeptide reads, in one-letter code: Prokineticin-1 (105 aa).

The signal sequence occupies residues 1 to 19; sequence MRGAVHIFIMLLLATASDC. 5 cysteine pairs are disulfide-bonded: cysteine 26/cysteine 38, cysteine 32/cysteine 50, cysteine 37/cysteine 78, cysteine 60/cysteine 86, and cysteine 80/cysteine 96.

It belongs to the AVIT (prokineticin) family. In terms of tissue distribution, highly expressed in liver and ovary and weakly expressed in testis and placenta. Expressed in mucosa and mesenchyme of embryonic gut during enteric nervous system development (at protein level). Predominantly expressed in kidney and liver. Also expressed in lung, ovary, placenta and testis. In fetal liver, is restricted to and highly expressed in hepatocytes. In adult kidney, expression is restricted to the endothelial tubule cells. In placenta, expressed throughout gestation.

It localises to the secreted. In terms of biological role, potently contracts gastrointestinal (GI) smooth muscle. Induces proliferation, migration and fenestration (the formation of membrane discontinuities) in capillary endothelial cells. Induces proliferation and differentiation, but not migration, of enteric neural crest cells. Directly influences neuroblastoma progression by promoting the proliferation and migration of neuroblastoma cells. Positively regulates PTGS2 expression and prostaglandin synthesis. May play a role in placentation. May play a role in normal and pathological testis angiogenesis. This is Prokineticin-1 from Mus musculus (Mouse).